The primary structure comprises 683 residues: Capsid polyprotein VP90 (683 aa).

The span at M1 to P13 shows a compositional bias: low complexity. 2 disordered regions span residues M1–L45 and P391–A413. Residues K14 to K39 show a composition bias toward basic residues. Over residues L398 to A413 the composition is skewed to pro residues.

This sequence belongs to the astroviridae capsid polyprotein family. In terms of processing, specific enzymatic cleavages by the host yield mature proteins.

It localises to the virion. In terms of biological role, self-assembles to form an icosahedral T=3 immature capsid. This Gallus gallus (Chicken) protein is Capsid polyprotein VP90.